A 456-amino-acid polypeptide reads, in one-letter code: Bifunctional protein GlmU (456 aa).

Residues 1-229 (MLNSAMSVVI…ISETDGVNNR (229 aa)) are pyrophosphorylase. UDP-N-acetyl-alpha-D-glucosamine is bound by residues 11 to 14 (LAAG), Lys25, Gln76, 81 to 82 (GT), 103 to 105 (YGD), Gly140, Glu154, Asn169, and Asn227. A Mg(2+)-binding site is contributed by Asp105. Asn227 serves as a coordination point for Mg(2+). Residues 230-250 (LQLSRLERIYQAEQAEKLLLS) are linker. The tract at residues 251–456 (GVMLRDPARF…QGWQRPVKKK (206 aa)) is N-acetyltransferase. UDP-N-acetyl-alpha-D-glucosamine-binding residues include Arg333 and Lys351. His363 serves as the catalytic Proton acceptor. Residues Tyr366 and Asn377 each contribute to the UDP-N-acetyl-alpha-D-glucosamine site. Acetyl-CoA contacts are provided by residues Ala380, 386–387 (NY), Ser405, Ala423, and Arg440.

This sequence in the N-terminal section; belongs to the N-acetylglucosamine-1-phosphate uridyltransferase family. In the C-terminal section; belongs to the transferase hexapeptide repeat family. Homotrimer. Mg(2+) serves as cofactor.

It localises to the cytoplasm. It catalyses the reaction alpha-D-glucosamine 1-phosphate + acetyl-CoA = N-acetyl-alpha-D-glucosamine 1-phosphate + CoA + H(+). The catalysed reaction is N-acetyl-alpha-D-glucosamine 1-phosphate + UTP + H(+) = UDP-N-acetyl-alpha-D-glucosamine + diphosphate. It functions in the pathway nucleotide-sugar biosynthesis; UDP-N-acetyl-alpha-D-glucosamine biosynthesis; N-acetyl-alpha-D-glucosamine 1-phosphate from alpha-D-glucosamine 6-phosphate (route II): step 2/2. The protein operates within nucleotide-sugar biosynthesis; UDP-N-acetyl-alpha-D-glucosamine biosynthesis; UDP-N-acetyl-alpha-D-glucosamine from N-acetyl-alpha-D-glucosamine 1-phosphate: step 1/1. It participates in bacterial outer membrane biogenesis; LPS lipid A biosynthesis. In terms of biological role, catalyzes the last two sequential reactions in the de novo biosynthetic pathway for UDP-N-acetylglucosamine (UDP-GlcNAc). The C-terminal domain catalyzes the transfer of acetyl group from acetyl coenzyme A to glucosamine-1-phosphate (GlcN-1-P) to produce N-acetylglucosamine-1-phosphate (GlcNAc-1-P), which is converted into UDP-GlcNAc by the transfer of uridine 5-monophosphate (from uridine 5-triphosphate), a reaction catalyzed by the N-terminal domain. The chain is Bifunctional protein GlmU from Salmonella choleraesuis (strain SC-B67).